The sequence spans 448 residues: Chromosomal replication initiator protein DnaA (448 aa).

Residues 1–73 (MSTHLTETWE…VNALKLLTSK (73 aa)) are domain I, interacts with DnaA modulators. The interval 73–109 (KKYNIDFIVTTEEKIEENEKNHNNEKSNIVVNDEMST) is domain II. Residues 110 to 326 (MLNPKYTFDS…GALIRIVAFS (217 aa)) form a domain III, AAA+ region region. Residues Gly154, Gly156, Lys157, and Thr158 each coordinate ATP. A domain IV, binds dsDNA region spans residues 327–448 (SLTNKEISVD…NELNKRINQK (122 aa)).

It belongs to the DnaA family. In terms of assembly, oligomerizes as a right-handed, spiral filament on DNA at oriC.

The protein localises to the cytoplasm. In terms of biological role, plays an essential role in the initiation and regulation of chromosomal replication. ATP-DnaA binds to the origin of replication (oriC) to initiate formation of the DNA replication initiation complex once per cell cycle. Binds the DnaA box (a 9 base pair repeat at the origin) and separates the double-stranded (ds)DNA. Forms a right-handed helical filament on oriC DNA; dsDNA binds to the exterior of the filament while single-stranded (ss)DNA is stabiized in the filament's interior. The ATP-DnaA-oriC complex binds and stabilizes one strand of the AT-rich DNA unwinding element (DUE), permitting loading of DNA polymerase. After initiation quickly degrades to an ADP-DnaA complex that is not apt for DNA replication. Binds acidic phospholipids. In Clostridium botulinum (strain 657 / Type Ba4), this protein is Chromosomal replication initiator protein DnaA.